A 161-amino-acid chain; its full sequence is ATP synthase subunit b 1 (161 aa).

A helical transmembrane segment spans residues 5 to 25 (AETWVAVAFVLMVALFIYFGA).

This sequence belongs to the ATPase B chain family. In terms of assembly, F-type ATPases have 2 components, F(1) - the catalytic core - and F(0) - the membrane proton channel. F(1) has five subunits: alpha(3), beta(3), gamma(1), delta(1), epsilon(1). F(0) has three main subunits: a(1), b(2) and c(10-14). The alpha and beta chains form an alternating ring which encloses part of the gamma chain. F(1) is attached to F(0) by a central stalk formed by the gamma and epsilon chains, while a peripheral stalk is formed by the delta and b chains.

Its subcellular location is the cell inner membrane. Its function is as follows. F(1)F(0) ATP synthase produces ATP from ADP in the presence of a proton or sodium gradient. F-type ATPases consist of two structural domains, F(1) containing the extramembraneous catalytic core and F(0) containing the membrane proton channel, linked together by a central stalk and a peripheral stalk. During catalysis, ATP synthesis in the catalytic domain of F(1) is coupled via a rotary mechanism of the central stalk subunits to proton translocation. In terms of biological role, component of the F(0) channel, it forms part of the peripheral stalk, linking F(1) to F(0). The chain is ATP synthase subunit b 1 from Afipia carboxidovorans (strain ATCC 49405 / DSM 1227 / KCTC 32145 / OM5) (Oligotropha carboxidovorans).